A 434-amino-acid polypeptide reads, in one-letter code: Alpha-enolase (434 aa).

Ser-2 is subject to N-acetylserine. Lys-5 is subject to N6-acetyllysine. Ser-40 is a binding site for Mg(2+). A Phosphotyrosine modification is found at Tyr-44. Lys-60 is modified (N6-acetyllysine; alternate). The residue at position 60 (Lys-60) is an N6-succinyllysine; alternate. Residues Lys-64 and Lys-71 each carry the N6-acetyllysine modification. Lys-89 is subject to N6-acetyllysine; alternate. An N6-succinyllysine; alternate modification is found at Lys-89. Residues Lys-92 and Lys-126 each carry the N6-acetyllysine modification. Substrate contacts are provided by His-158 and Glu-167. 2 positions are modified to N6-acetyllysine: Lys-193 and Lys-199. An N6-acetyllysine; alternate modification is found at Lys-202. A Glycyl lysine isopeptide (Lys-Gly) (interchain with G-Cter in SUMO2); alternate cross-link involves residue Lys-202. The active-site Proton donor is the Glu-210. N6-acetyllysine; alternate occurs at positions 228 and 233. Lys-228 carries the post-translational modification N6-succinyllysine; alternate. An N6-(2-hydroxyisobutyryl)lysine; alternate modification is found at Lys-228. Residue Lys-233 is modified to N6-malonyllysine; alternate. Asp-245 contacts Mg(2+). Phosphoserine is present on Ser-254. Lys-256 is modified (N6-acetyllysine). The residue at position 263 (Ser-263) is a Phosphoserine. Residue Lys-281 is modified to N6-acetyllysine; alternate. An N6-(2-hydroxyisobutyryl)lysine; alternate modification is found at Lys-281. Tyr-287 is modified (phosphotyrosine). Residue Ser-291 is modified to Phosphoserine. Residues Glu-293 and Asp-318 each coordinate Mg(2+). 2 residues coordinate substrate: Glu-293 and Asp-318. N6-acetyllysine is present on residues Lys-335 and Lys-343. The Proton acceptor role is filled by Lys-343. Substrate contacts are provided by residues 370–373 and Lys-394; that span reads SHRS. The segment at 405 to 434 is required for interaction with PLG; the sequence is AKYNQILRIEEELGSKAKFAGRSFRNPLAK. At Lys-406 the chain carries N6-acetyllysine. An N6-acetyllysine; alternate modification is found at Lys-420. Lys-420 carries the N6-succinyllysine; alternate modification. Lys-420 is subject to N6-malonyllysine; alternate.

The protein belongs to the enolase family. Mammalian enolase is composed of 3 isozyme subunits, alpha, beta and gamma, which can form homodimers or heterodimers which are cell-type and development-specific. ENO1 interacts with PLG in the neuronal plasma membrane and promotes its activation. The C-terminal lysine is required for this binding. Interacts with ENO4 and PGAM2. Interacts with CMTM6. It depends on Mg(2+) as a cofactor. In terms of processing, ISGylated. Post-translationally, lysine 2-hydroxyisobutyrylation (Khib) by p300/EP300 activates the phosphopyruvate hydratase activity. The alpha/alpha homodimer is expressed in embryo and in most adult tissues. The alpha/beta heterodimer and the beta/beta homodimer are found in striated muscle, and the alpha/gamma heterodimer and the gamma/gamma homodimer in neurons.

The protein resides in the cytoplasm. It is found in the cell membrane. It carries out the reaction (2R)-2-phosphoglycerate = phosphoenolpyruvate + H2O. It functions in the pathway carbohydrate degradation; glycolysis; pyruvate from D-glyceraldehyde 3-phosphate: step 4/5. Glycolytic enzyme the catalyzes the conversion of 2-phosphoglycerate to phosphoenolpyruvate. In addition to glycolysis, involved in various processes such as growth control, hypoxia tolerance and allergic responses. May also function in the intravascular and pericellular fibrinolytic system due to its ability to serve as a receptor and activator of plasminogen on the cell surface of several cell-types such as leukocytes and neurons. Stimulates immunoglobulin production. The polypeptide is Alpha-enolase (ENO1) (Bos taurus (Bovine)).